The chain runs to 89 residues: uncharacterized protein (89 aa).

This is an uncharacterized protein from Schizosaccharomyces pombe (strain 972 / ATCC 24843) (Fission yeast).